We begin with the raw amino-acid sequence, 205 residues long: MNDFTLNAQVRSDLGKGASRRLRRNAALVPAVIYGGNNAPQSISILAKDFAKLLENEASFSHVLNLNVDGQNESVLIKALQRHPAKGFVLHADFVRVVAGHKLTATVPLHFINQETSVGVKKQGGEILHNLNEVEVSCMPQDLPEFIEVDMANVEVGQVLHMTDIKLPKGVELVALAHGSDLPVANVHAPRVSKEDAPKEEDAAE.

The protein belongs to the bacterial ribosomal protein bL25 family. CTC subfamily. In terms of assembly, part of the 50S ribosomal subunit; part of the 5S rRNA/L5/L18/L25 subcomplex. Contacts the 5S rRNA. Binds to the 5S rRNA independently of L5 and L18.

Functionally, this is one of the proteins that binds to the 5S RNA in the ribosome where it forms part of the central protuberance. This is Large ribosomal subunit protein bL25 from Stutzerimonas stutzeri (strain A1501) (Pseudomonas stutzeri).